We begin with the raw amino-acid sequence, 279 residues long: 2-dehydro-3-deoxyphosphooctonate aldolase (279 aa).

The protein belongs to the KdsA family.

It localises to the cytoplasm. The catalysed reaction is D-arabinose 5-phosphate + phosphoenolpyruvate + H2O = 3-deoxy-alpha-D-manno-2-octulosonate-8-phosphate + phosphate. The protein operates within carbohydrate biosynthesis; 3-deoxy-D-manno-octulosonate biosynthesis; 3-deoxy-D-manno-octulosonate from D-ribulose 5-phosphate: step 2/3. It functions in the pathway bacterial outer membrane biogenesis; lipopolysaccharide biosynthesis. This is 2-dehydro-3-deoxyphosphooctonate aldolase from Aromatoleum aromaticum (strain DSM 19018 / LMG 30748 / EbN1) (Azoarcus sp. (strain EbN1)).